The chain runs to 311 residues: Coproporphyrin III ferrochelatase 1 (311 aa).

Fe-coproporphyrin III contacts are provided by residues Tyr12, Arg29, 45-46, Ser53, and Tyr124; that span reads RY. Residues His182 and Glu263 each coordinate Fe(2+).

The protein belongs to the ferrochelatase family.

The protein resides in the cytoplasm. It catalyses the reaction Fe-coproporphyrin III + 2 H(+) = coproporphyrin III + Fe(2+). The protein operates within porphyrin-containing compound metabolism; protoheme biosynthesis. Its function is as follows. Involved in coproporphyrin-dependent heme b biosynthesis. Catalyzes the insertion of ferrous iron into coproporphyrin III to form Fe-coproporphyrin III. This chain is Coproporphyrin III ferrochelatase 1, found in Bacillus cereus (strain ATCC 10987 / NRS 248).